A 449-amino-acid chain; its full sequence is Glucose-6-phosphate isomerase (449 aa).

The active-site Proton donor is the E291. Catalysis depends on residues H312 and K426.

It belongs to the GPI family.

It is found in the cytoplasm. The enzyme catalyses alpha-D-glucose 6-phosphate = beta-D-fructose 6-phosphate. It participates in carbohydrate biosynthesis; gluconeogenesis. Its pathway is carbohydrate degradation; glycolysis; D-glyceraldehyde 3-phosphate and glycerone phosphate from D-glucose: step 2/4. In terms of biological role, catalyzes the reversible isomerization of glucose-6-phosphate to fructose-6-phosphate. This chain is Glucose-6-phosphate isomerase, found in Streptococcus pneumoniae (strain CGSP14).